We begin with the raw amino-acid sequence, 192 residues long: Adenylate kinase (192 aa).

An ATP-binding site is contributed by 12-17 (GSGKTT). The NMP stretch occupies residues 34-63 (STGDLLRAEVASGSELGKTIDSFISKGNLV). AMP contacts are provided by residues Thr35, Arg40, 61-63 (NLV), 88-91 (GYPR), and Gln95. The tract at residues 130 to 136 (GRNRGAD) is LID. Arg131 lines the ATP pocket. Residues Arg133 and Arg145 each coordinate AMP. Residue Arg173 coordinates ATP.

It belongs to the adenylate kinase family. Monomer.

It is found in the cytoplasm. The enzyme catalyses AMP + ATP = 2 ADP. It participates in purine metabolism; AMP biosynthesis via salvage pathway; AMP from ADP: step 1/1. In terms of biological role, catalyzes the reversible transfer of the terminal phosphate group between ATP and AMP. Plays an important role in cellular energy homeostasis and in adenine nucleotide metabolism. This chain is Adenylate kinase, found in Campylobacter jejuni subsp. jejuni serotype O:6 (strain 81116 / NCTC 11828).